A 520-amino-acid polypeptide reads, in one-letter code: Pleckstrin homology domain-containing family A member 8 (520 aa).

Residues 1–93 (MEGVLYKWTN…WLVALGSAKA (93 aa)) enclose the PH domain. Threonine 139 is modified (phosphothreonine). At serine 145 the chain carries Phosphoserine. Threonine 153 bears the Phosphothreonine mark. The span at 275–285 (GEESLGNHDSD) shows a compositional bias: basic and acidic residues. Residues 275-305 (GEESLGNHDSDLAQPELHSTSSSPESHWEED) form a disordered region. The glycolipid transfer protein homology domain stretch occupies residues 311-520 (TFFSTMNTSF…VHGLESDEVV (210 aa)).

In terms of assembly, homodimer. Interacts with ARF1; the interaction together with phosphatidylinositol 4-phosphate binding is required for FAPP2 GlcCer transfer ability.

It localises to the cytoplasm. The protein localises to the golgi apparatus. It is found in the trans-Golgi network membrane. The protein resides in the membrane. In terms of biological role, cargo transport protein that is required for apical transport from the trans-Golgi network (TGN). Transports AQP2 from the trans-Golgi network (TGN) to sites of AQP2 phosphorylation. Mediates the non-vesicular transport of glucosylceramide (GlcCer) from the trans-Golgi network (TGN) to the plasma membrane and plays a pivotal role in the synthesis of complex glycosphingolipids. Binding of both phosphatidylinositol 4-phosphate (PIP) and ARF1 are essential for the GlcCer transfer ability. Also required for primary cilium formation, possibly by being involved in the transport of raft lipids to the apical membrane, and for membrane tubulation. In Bos taurus (Bovine), this protein is Pleckstrin homology domain-containing family A member 8 (PLEKHA8).